We begin with the raw amino-acid sequence, 894 residues long: Histone-lysine N-methyltransferase EZ2 (894 aa).

Positions 1–11 (MASSSKASDSS) are enriched in low complexity. 3 disordered regions span residues 1–25 (MASSSKASDSSQRSKRSDQGMGKDA), 395–447 (SSVS…KRQK), and 491–513 (KKTSRKDMCGESPATTMENVGRQ). Over residues 395–421 (SSVSAEESTTTPSADISETENVSSDLP) the composition is skewed to polar residues. Positions 425–435 (LRKHKISKHGP) are enriched in basic residues. Polar residues predominate over residues 503–513 (PATTMENVGRQ). The 51-residue stretch at 527–577 (TLSCWSALERDLYLKGIEIFGKNSCLIARNLLSGLKTCIEVANYMYNNGAA) folds into the SANT domain. Positions 627-731 (AGHPTVRKRT…SLGEPLARGD (105 aa)) constitute a CXC domain. The region spanning 746–861 (QRILLGRSDV…ASEELFYDYR (116 aa)) is the SET domain. The interval 867–894 (APAWARRPEGSKKDEASVSHRRAHKVAR) is disordered. The span at 872–884 (RRPEGSKKDEASV) shows a compositional bias: basic and acidic residues. Residues 885–894 (SHRRAHKVAR) are compositionally biased toward basic residues.

This sequence belongs to the class V-like SAM-binding methyltransferase superfamily. Histone-lysine methyltransferase family. EZ subfamily.

The protein resides in the nucleus. The enzyme catalyses L-lysyl(27)-[histone H3] + 3 S-adenosyl-L-methionine = N(6),N(6),N(6)-trimethyl-L-lysyl(27)-[histone H3] + 3 S-adenosyl-L-homocysteine + 3 H(+). In terms of biological role, polycomb group (PcG) protein. Catalytic subunit of some PcG multiprotein complex, which methylates 'Lys-27' of histone H3, leading to transcriptional repression of the affected target genes. PcG proteins are not required to initiate repression, but to maintain it during later stages of development. The protein is Histone-lysine N-methyltransferase EZ2 (EZ2) of Zea mays (Maize).